Here is a 1849-residue protein sequence, read N- to C-terminus: UPF0606 protein KIAA1549L (1849 aa).

The span at 1-10 (MDHTASQNAQ) shows a compositional bias: polar residues. Disordered regions lie at residues 1–70 (MDHT…LLQL), 142–166 (ATANDSANPLHLSAAPENSRGPALS), 213–242 (PTENHASPSPVPEMPTLPAEGSDGSPPATR), and 529–586 (RHSV…ERNA). 2 stretches are compositionally biased toward polar residues: residues 529 to 541 (RHSVSHPQLQLPN) and 552 to 586 (PGPTSTGSLQEMLSDGTDTGSEISSDINSSPERNA). Positions 958-986 (KFAQTMEQRLQKAFQDAERKVLNTKSNLT) form a coiled coil. Residues 1180–1200 (LWIIAAVLAPIAVVTVIIIII) form a helical membrane-spanning segment. Disordered regions lie at residues 1258-1338 (LPIR…EEEG), 1460-1546 (SKNR…SQPS), 1656-1679 (RSTSDIGSKTRMAESTGPEPAQLH), and 1769-1819 (SRYP…APLT). Polar residues-rich tracts occupy residues 1290-1319 (PSENGSVISNESGKPSSGRRSPQNVMAQQK), 1463-1482 (RQQMKNSVYRSRQSLNSPSP), and 1537-1546 (ETSTLSSQPS). Low complexity-rich tracts occupy residues 1769 to 1786 (SRYPQSSPSRLPRQYSQP) and 1795 to 1809 (QAPAPSTAASQQSLA).

Belongs to the UPF0606 family.

The protein localises to the membrane. This Homo sapiens (Human) protein is UPF0606 protein KIAA1549L (KIAA1549L).